We begin with the raw amino-acid sequence, 517 residues long: Benzoate 4-monooxygenase bphA (517 aa).

A helical transmembrane segment spans residues 4–24 (LLLSPYGAYLGLALLVLYYLL). Asparagine 282 and asparagine 325 each carry an N-linked (GlcNAc...) asparagine glycan. Cysteine 461 lines the heme pocket.

It belongs to the cytochrome P450 family. Requires heme as cofactor.

Its subcellular location is the membrane. It carries out the reaction benzoate + reduced [NADPH--hemoprotein reductase] + O2 = 4-hydroxybenzoate + oxidized [NADPH--hemoprotein reductase] + H2O + H(+). Its function is as follows. Cytochrome P450 monooxygenase; part of the benzoic acid degradation pathway also known as the protocatechuic acid pathway. Benzoic acid debradation begins with the conversion of benzoic acid into 4-hydroxybenzoic acid through hydroxylation by the benzoate-4-monooxygenase bphA, and its partner NADPH-cytochrome P450 reductase cprA which act as a mediator in electron donation from NADPH. 4-Hydroxybenzoic acid is then converted into 3,4-dihydroxybenzoic acid (also called protocatechuic acid) by the p-hydroxybenzoate-m-hydroxylase phhA. Protocatechuic acid is converted into 3-carboxy-cis,cis-muconic acid by the intradiol ring-cleavage dioxygenase prcA, which is further metabolized through the 3-oxoadipate pathway to finally enter the tricarboxylic acid cycle (TCA). Functionally, responsible for cytochrome P450 dependent benzoate hydroxylation in microsomes; requires cprA as the mediator in electron donation from NADPH. This chain is Benzoate 4-monooxygenase bphA, found in Aspergillus niger.